Consider the following 533-residue polypeptide: Beta-apo-4'-carotenal oxygenase (533 aa).

Catalysis depends on residues Glu-226 and Cys-260.

It belongs to the aldehyde dehydrogenase family.

It catalyses the reaction 4'-apo-beta-carotenal + NAD(+) + H2O = neurosporaxanthin + NADH + 2 H(+). In terms of biological role, beta-apo-4'-carotenal oxygenase involved in the last step of synthesis of neurosporaxanthin, a carboxylic apocarotenoid acting as an essential protective pigment and leading to orange pigmentation. Converts the aldehyde beta-apo-4'-carotenal into neurosporaxanthin. Neurosporaxanthin is synthesized from geranyl-geranyl pyrophosphate (GGPP) through several enzymatic activities. Phytoene synthase activity performed by the bifunctional enzyme al-2 first produces phytoene from geranyl-geranyl pyrophosphate (GGPP). The phytoene dehydrogenase al-1 then introduces 5 desaturations to lead to 3,4-didehydrolycopene via the intermediates phytofluene, zeta-carotene, neurosporene and lycopene. Al-2 cyclase activity then converts 3,4-didehydrolycopene into torulene. Al-2 can also convet lycopene into gamma-carotene which in turn is converted to beta-carotene by an additional al-2 cyclization reaction. Torulene is the substrate of the dioxidase cao-2 that breaks the molecule, removing five carbon atoms to yield beta-apo-4'-carotenal, whereas the aldehyde dehydrogenase ylo-1 mediates the last step by converting beta-apo-4'-carotenal into neurosporaxanthin. The polypeptide is Beta-apo-4'-carotenal oxygenase (Neurospora crassa (strain ATCC 24698 / 74-OR23-1A / CBS 708.71 / DSM 1257 / FGSC 987)).